A 168-amino-acid chain; its full sequence is Photosystem I assembly protein Ycf3 (168 aa).

TPR repeat units follow at residues 35 to 68 (AFTYYRDGMSAQSEGNYAEALQNYYEAMRLEIDP), 72 to 105 (SYILYNIGLIHTSNGEHTKALEYYFRALERNPFL), and 120 to 153 (GEQAIQQGDSEIAEAWFDQAAEYWKQAIALTPGN).

This sequence belongs to the Ycf3 family.

Its subcellular location is the plastid. It localises to the chloroplast thylakoid membrane. Functionally, essential for the assembly of the photosystem I (PSI) complex. May act as a chaperone-like factor to guide the assembly of the PSI subunits. The sequence is that of Photosystem I assembly protein Ycf3 from Solanum lycopersicum (Tomato).